A 248-amino-acid chain; its full sequence is Ubiquinone/menaquinone biosynthesis C-methyltransferase UbiE (248 aa).

The S-adenosyl-L-methionine site is built by S68 and D92.

It belongs to the class I-like SAM-binding methyltransferase superfamily. MenG/UbiE family.

It carries out the reaction a 2-demethylmenaquinol + S-adenosyl-L-methionine = a menaquinol + S-adenosyl-L-homocysteine + H(+). The catalysed reaction is a 2-methoxy-6-(all-trans-polyprenyl)benzene-1,4-diol + S-adenosyl-L-methionine = a 5-methoxy-2-methyl-3-(all-trans-polyprenyl)benzene-1,4-diol + S-adenosyl-L-homocysteine + H(+). The protein operates within quinol/quinone metabolism; menaquinone biosynthesis; menaquinol from 1,4-dihydroxy-2-naphthoate: step 2/2. It participates in cofactor biosynthesis; ubiquinone biosynthesis. Functionally, methyltransferase required for the conversion of demethylmenaquinol (DMKH2) to menaquinol (MKH2) and the conversion of 2-polyprenyl-6-methoxy-1,4-benzoquinol (DDMQH2) to 2-polyprenyl-3-methyl-6-methoxy-1,4-benzoquinol (DMQH2). The protein is Ubiquinone/menaquinone biosynthesis C-methyltransferase UbiE of Rickettsia conorii (strain ATCC VR-613 / Malish 7).